The sequence spans 336 residues: MNEPKLISGNANLTLAKSIARRMSVHRGMAVSLVDARVERFNDQEIFVEVYENVRGEDMYVIQPTSNPANDNLMELLIIADALRRSSADRITAVIPYFGYARQDRRAKARTPISAKLVANLIVEAGIDRVLTLDLHAAQIQGFFDIPVDNLYSAPVFALDIEHHFKGQLQDLMVVSPDVGGVARAREIAKRINAPLAIVDKRREKPGEIAEMTVIGNVAGKKCIIVDDICDTAGTLCKAAEVLIENGAVEVHSYITHGVLSGPAVERVTKSVMKSLVITDSIEPSAAVRGAPNIRIVPTAPMFAQAILNIWSGTSVSSLFETDTLVPIYEGMYQRG.

Residues 43–45 (DQE) and 102–103 (RQ) contribute to the ATP site. Residues His136 and Asp178 each coordinate Mg(2+). Lys201 is an active-site residue. Residues Arg203, Asp227, and 231-235 (DTAGT) contribute to the D-ribose 5-phosphate site.

The protein belongs to the ribose-phosphate pyrophosphokinase family. Class I subfamily. As to quaternary structure, homohexamer. It depends on Mg(2+) as a cofactor.

It is found in the cytoplasm. It catalyses the reaction D-ribose 5-phosphate + ATP = 5-phospho-alpha-D-ribose 1-diphosphate + AMP + H(+). The protein operates within metabolic intermediate biosynthesis; 5-phospho-alpha-D-ribose 1-diphosphate biosynthesis; 5-phospho-alpha-D-ribose 1-diphosphate from D-ribose 5-phosphate (route I): step 1/1. In terms of biological role, involved in the biosynthesis of the central metabolite phospho-alpha-D-ribosyl-1-pyrophosphate (PRPP) via the transfer of pyrophosphoryl group from ATP to 1-hydroxyl of ribose-5-phosphate (Rib-5-P). This is Ribose-phosphate pyrophosphokinase from Cereibacter sphaeroides (strain KD131 / KCTC 12085) (Rhodobacter sphaeroides).